The following is a 322-amino-acid chain: MNKPKIFIDGEAGTTGLQIYSRLNERDDIELVSIAASKRKDADERAKLLNSVDVAILCLPDDAAREAVSLVHSSQVKILDASTAYRTAQGWVYGFPELNPGQREKIANAQFVSNPGCYPTGFLACVRPLIAQGILPSSFPITINAVSGYSGGGKSLIQKYDSFHEQQKGATSDYPFGIYGLQFGHKHVKEMHQHSGLASPPLFIPAVGDFEQGMLVQIPLPLWTLDNPPSGEEIHQAIAQYYQGEKFVQVASFKDPSLLRDGTFLDATAVNGTNIVQVFVFANDNTKEALLVARLDNLGKGASGAAVQNLNIMLGLPEELGL.

Cys-117 is a catalytic residue.

Belongs to the NAGSA dehydrogenase family. Type 2 subfamily.

It localises to the cytoplasm. The catalysed reaction is N-acetyl-L-glutamate 5-semialdehyde + phosphate + NADP(+) = N-acetyl-L-glutamyl 5-phosphate + NADPH + H(+). It functions in the pathway amino-acid biosynthesis; L-arginine biosynthesis; N(2)-acetyl-L-ornithine from L-glutamate: step 3/4. Its function is as follows. Catalyzes the NADPH-dependent reduction of N-acetyl-5-glutamyl phosphate to yield N-acetyl-L-glutamate 5-semialdehyde. The sequence is that of N-acetyl-gamma-glutamyl-phosphate reductase from Trichormus variabilis (strain ATCC 29413 / PCC 7937) (Anabaena variabilis).